The chain runs to 178 residues: Cytochrome b6-f complex iron-sulfur subunit 3 (178 aa).

Residues phenylalanine 20–isoleucine 42 traverse the membrane as a helical segment. Positions proline 65–isoleucine 161 constitute a Rieske domain. [2Fe-2S] cluster contacts are provided by cysteine 107, histidine 109, cysteine 125, and histidine 128. A disulfide bridge connects residues cysteine 112 and cysteine 127.

This sequence belongs to the Rieske iron-sulfur protein family. The 4 large subunits of the cytochrome b6-f complex are cytochrome b6, subunit IV (17 kDa polypeptide, PetD), cytochrome f and the Rieske protein, while the 4 small subunits are PetG, PetL, PetM and PetN. The complex functions as a dimer. [2Fe-2S] cluster is required as a cofactor.

The protein resides in the cellular thylakoid membrane. It catalyses the reaction 2 oxidized [plastocyanin] + a plastoquinol + 2 H(+)(in) = 2 reduced [plastocyanin] + a plastoquinone + 4 H(+)(out). Functionally, component of the cytochrome b6-f complex, which mediates electron transfer between photosystem II (PSII) and photosystem I (PSI), cyclic electron flow around PSI, and state transitions. This Nostoc sp. (strain PCC 7120 / SAG 25.82 / UTEX 2576) protein is Cytochrome b6-f complex iron-sulfur subunit 3.